Here is a 321-residue protein sequence, read N- to C-terminus: MATH domain and coiled-coil domain-containing protein At3g58260 (321 aa).

The region spanning 6-135 (NNTFTWVIKN…NDEVMVAVAV (130 aa)) is the MATH domain. The stretch at 232–283 (KLDWLEKKLDELFEKKKEEADKIRMQNIEEELKDLRQKCSSLEALLKKEKTG) forms a coiled coil.

In Arabidopsis thaliana (Mouse-ear cress), this protein is MATH domain and coiled-coil domain-containing protein At3g58260.